The following is a 200-amino-acid chain: GTP cyclohydrolase-2 (200 aa).

49–53 (RVHSE) contributes to the GTP binding site. Zn(2+) is bound by residues cysteine 54, cysteine 65, and cysteine 67. GTP is bound by residues glutamine 70, 92-94 (EGR), and threonine 114. The active-site Proton acceptor is the aspartate 126. Catalysis depends on arginine 128, which acts as the Nucleophile. GTP is bound by residues threonine 149 and lysine 154.

Belongs to the GTP cyclohydrolase II family. As to quaternary structure, homodimer. It depends on Zn(2+) as a cofactor.

The enzyme catalyses GTP + 4 H2O = 2,5-diamino-6-hydroxy-4-(5-phosphoribosylamino)-pyrimidine + formate + 2 phosphate + 3 H(+). It functions in the pathway cofactor biosynthesis; riboflavin biosynthesis; 5-amino-6-(D-ribitylamino)uracil from GTP: step 1/4. In terms of biological role, catalyzes the conversion of GTP to 2,5-diamino-6-ribosylamino-4(3H)-pyrimidinone 5'-phosphate (DARP), formate and pyrophosphate. The sequence is that of GTP cyclohydrolase-2 from Klebsiella pneumoniae (strain 342).